Consider the following 276-residue polypeptide: uncharacterized protein (276 aa).

Tyrosine 47 serves as the catalytic Proton donor. Histidine 110 lines the substrate pocket.

It belongs to the aldo/keto reductase family.

The protein localises to the cytoplasm. It localises to the nucleus. This is an uncharacterized protein from Schizosaccharomyces pombe (strain 972 / ATCC 24843) (Fission yeast).